The primary structure comprises 204 residues: ATP synthase subunit b 2 (204 aa).

The segment at 8-28 (AQSSTTEGAEAHDAAAAGEVH) is disordered. Residues 56-76 (LLWLAITFGLFYLLMSKVIIP) traverse the membrane as a helical segment.

The protein belongs to the ATPase B chain family. In terms of assembly, F-type ATPases have 2 components, F(1) - the catalytic core - and F(0) - the membrane proton channel. F(1) has five subunits: alpha(3), beta(3), gamma(1), delta(1), epsilon(1). F(0) has three main subunits: a(1), b(2) and c(10-14). The alpha and beta chains form an alternating ring which encloses part of the gamma chain. F(1) is attached to F(0) by a central stalk formed by the gamma and epsilon chains, while a peripheral stalk is formed by the delta and b chains.

The protein resides in the cell inner membrane. Its function is as follows. F(1)F(0) ATP synthase produces ATP from ADP in the presence of a proton or sodium gradient. F-type ATPases consist of two structural domains, F(1) containing the extramembraneous catalytic core and F(0) containing the membrane proton channel, linked together by a central stalk and a peripheral stalk. During catalysis, ATP synthesis in the catalytic domain of F(1) is coupled via a rotary mechanism of the central stalk subunits to proton translocation. Component of the F(0) channel, it forms part of the peripheral stalk, linking F(1) to F(0). The b'-subunit is a diverged and duplicated form of b found in plants and photosynthetic bacteria. This chain is ATP synthase subunit b 2 (atpF2), found in Rhizobium meliloti (strain 1021) (Ensifer meliloti).